The primary structure comprises 235 residues: MRIDDPSNAVSDLALLGLMQLISPALPIGAFAWSQGLESAFELGWVNNEAQLGEWLEGVLGDGLTRCELPVLARLQRCWANNDGDGLAFWNDWLHANRETAELSDEDTRLGQALIRLLNSLELQPQKALGHVELPEEPGYVTVFAWTAHQRQVPVRQALLGFAWGWLENQLAAACKALPLGHTAAQRLNETLRPQLVAAVDKALTLTDEQLGPILPGLALGSAQHETQYSRLFRS.

Belongs to the UreF family. UreD, UreF and UreG form a complex that acts as a GTP-hydrolysis-dependent molecular chaperone, activating the urease apoprotein by helping to assemble the nickel containing metallocenter of UreC. The UreE protein probably delivers the nickel.

The protein resides in the cytoplasm. Functionally, required for maturation of urease via the functional incorporation of the urease nickel metallocenter. This Psychrobacter cryohalolentis (strain ATCC BAA-1226 / DSM 17306 / VKM B-2378 / K5) protein is Urease accessory protein UreF.